The primary structure comprises 280 residues: Dimethylglycine N-methyltransferase (280 aa).

It belongs to the methyltransferase superfamily. Monomer.

It carries out the reaction N,N-dimethylglycine + S-adenosyl-L-methionine = glycine betaine + S-adenosyl-L-homocysteine + H(+). Its pathway is amine and polyamine biosynthesis; betaine biosynthesis via glycine pathway; betaine from glycine: step 3/3. In terms of biological role, catalyzes the methylation of dimethylglycine to betaine with S-adenosylmethionine (AdoMet) acting as the methyl donor. It has strict specificity for dimethylglycine as the methyl group acceptors. In Parasynechococcus marenigrum (strain WH8102), this protein is Dimethylglycine N-methyltransferase.